A 403-amino-acid polypeptide reads, in one-letter code: Prostaglandin E2 receptor EP1 subtype (403 aa).

At 1–38 (MSLCGPLNLSLAGEATPCAEPGAPNASAWPPSGRASAS) the chain is on the extracellular side. N-linked (GlcNAc...) asparagine glycans are attached at residues Asn8 and Asn25. A helical transmembrane segment spans residues 39–65 (PALPIFSMTLGAVSNVLALALLAQAAG). At 66–75 (RLRRRRSAAT) the chain is on the cytoplasmic side. A helical transmembrane segment spans residues 76–99 (FLLFVASLLATDLAGHVIPGALVL). The Extracellular segment spans residues 100 to 114 (RLYAAGRSPAGGACH). A disulfide bridge connects residues Cys113 and Cys191. Residues 115–136 (FLGGCMVFFGLCPLLLGCGMAV) form a helical membrane-spanning segment. The Cytoplasmic portion of the chain corresponds to 137–158 (ERCVGVTRPLLHAARVSAARAR). The helical transmembrane segment at 159 to 180 (LALAVLAALALAVALLPLARVG) threads the bilayer. Topologically, residues 181–204 (RYELQYPGTWCFIGLRPAGGWRQA) are extracellular. A helical transmembrane segment spans residues 205–230 (LLAGLFAGLGLAALLAALVCNTLSGL). Over 231–295 (ALLRARWRRR…ARRARAHDVE (65 aa)) the chain is Cytoplasmic. A disordered region spans residues 243-287 (RRRPQACGPDGRRHWGARAPRSASASSSSSVASVPGGSPGRGSAR). Low complexity predominate over residues 259 to 278 (ARAPRSASASSSSSVASVPG). The chain crosses the membrane as a helical span at residues 296–322 (MVGQLVGIMVVSCICWSPLLVLVVLAV). The Extracellular portion of the chain corresponds to 323 to 333 (GGWGSSSLQRP). The chain crosses the membrane as a helical span at residues 334-355 (LFLAVRLASWNQILDPWVYILL). Residues 356 to 403 (RQAVLRQLLRLLPPRPGAKGSPAGLALTRSAWEASSLRSSRHSSLSHL) are Cytoplasmic-facing.

Belongs to the G-protein coupled receptor 1 family.

The protein resides in the cell membrane. In terms of biological role, receptor for prostaglandin E2 (PGE2). The activity of this receptor is mediated by G(q) proteins which activate a phosphatidylinositol-calcium second messenger system. May play a role as an important modulator of renal function. Implicated the smooth muscle contractile response to PGE2 in various tissues. In Canis lupus familiaris (Dog), this protein is Prostaglandin E2 receptor EP1 subtype (PTGER1).